Here is a 230-residue protein sequence, read N- to C-terminus: UPF0173 metal-dependent hydrolase MK1542 (230 aa).

The protein belongs to the UPF0173 family.

The polypeptide is UPF0173 metal-dependent hydrolase MK1542 (Methanopyrus kandleri (strain AV19 / DSM 6324 / JCM 9639 / NBRC 100938)).